The primary structure comprises 701 residues: F-box/LRR-repeat protein 17 (701 aa).

Residues 1 to 11 (MGHLLSKEPRN) show a composition bias toward basic and acidic residues. Disordered stretches follow at residues 1–20 (MGHL…RPRC), 72–94 (APAG…YAAA), and 227–300 (GGGG…DADC). Residues 227–237 (GGGGGPAGGGA) are compositionally biased toward gly residues. A compositionally biased stretch (pro residues) spans 252-264 (EQPPQPLCPPPSS). Residues 318–365 (TPDINQLPPSILLKIFSNLSLDERCLSASLVCKYWRDLCLDFQFWKQL) enclose the F-box domain.

This sequence belongs to the FBXL17 family. Part of the SCF (SKP1-CUL1-F-box) E3 ubiquitin-protein ligase complex SCF(FBXL17) composed of CUL1, SKP1, RBX1 and FBXL17. Interacts with BTB domain-containing proteins such as KLHL12, BCL6 and BACH1; specifically recognizes and binds a conserved degron of non-consecutive residues present at the interface of BTB dimers of aberrant composition. Interacts with SUFU. Interacts with PRMT1.

Its subcellular location is the cytoplasm. The protein resides in the nucleus. In terms of biological role, substrate-recognition component of the SCF(FBXL17) E3 ubiquitin ligase complex, a key component of a quality control pathway required to ensure functional dimerization of BTB domain-containing proteins (dimerization quality control, DQC). FBXL17 specifically recognizes and binds a conserved degron of non-consecutive residues present at the interface of BTB dimers of aberrant composition: aberrant BTB dimer are then ubiquitinated by the SCF(FBXL17) complex and degraded by the proteasome. The ability of the SCF(FBXL17) complex to eliminate compromised BTB dimers is required for the differentiation and survival of neural crest and neuronal cells. The SCF(FBXL17) complex mediates ubiquitination and degradation of BACH1. The SCF(FBXL17) complex is also involved in the regulation of the hedgehog/smoothened (Hh) signaling pathway by mediating the ubiquitination and degradation of SUFU, allowing the release of GLI1 from SUFU for proper Hh signal transduction. The SCF(FBXL17) complex mediates ubiquitination and degradation of PRMT1. The protein is F-box/LRR-repeat protein 17 of Homo sapiens (Human).